A 131-amino-acid polypeptide reads, in one-letter code: Transcription antitermination protein NusB (131 aa).

Belongs to the NusB family.

Its function is as follows. Involved in transcription antitermination. Required for transcription of ribosomal RNA (rRNA) genes. Binds specifically to the boxA antiterminator sequence of the ribosomal RNA (rrn) operons. The polypeptide is Transcription antitermination protein NusB (Campylobacter curvus (strain 525.92)).